A 509-amino-acid polypeptide reads, in one-letter code: Histidine ammonia-lyase (509 aa).

A cross-link (5-imidazolinone (Ala-Gly)) is located at residues 144–146; sequence ASG. 2,3-didehydroalanine (Ser) is present on Ser145.

This sequence belongs to the PAL/histidase family. In terms of processing, contains an active site 4-methylidene-imidazol-5-one (MIO), which is formed autocatalytically by cyclization and dehydration of residues Ala-Ser-Gly.

The protein localises to the cytoplasm. The enzyme catalyses L-histidine = trans-urocanate + NH4(+). The protein operates within amino-acid degradation; L-histidine degradation into L-glutamate; N-formimidoyl-L-glutamate from L-histidine: step 1/3. The polypeptide is Histidine ammonia-lyase (Rhodospirillum centenum (strain ATCC 51521 / SW)).